The sequence spans 271 residues: MPRRTAFFISDRTGITVESMGDALLNQFEVNLKRENHPFIDSPEKAHQLVNIINATAEKSALRPLVFSSIVDEEIRNIVKSSAGLHLSFFDAFLGTLEKELGVSALQFSPRINSIINTERYDARMESLNFTLNHDDGSSDRNLQHAEVILIGVSRSGKTPTCLYLALQYGIRAANYPLTPEDLQSPNLPNMVKPFRNKLFGLTIDPERLSKIRQERRPNSEYADILTCKREVSDAKAMFYRFNLPYANTTHKSVEELAVHIMQTCHLKRRY.

ADP is bound at residue 152-159; it reads GVSRSGKT.

The protein belongs to the pyruvate, phosphate/water dikinase regulatory protein family. PSRP subfamily.

The catalysed reaction is [pyruvate, water dikinase] + ADP = [pyruvate, water dikinase]-phosphate + AMP + H(+). It carries out the reaction [pyruvate, water dikinase]-phosphate + phosphate + H(+) = [pyruvate, water dikinase] + diphosphate. In terms of biological role, bifunctional serine/threonine kinase and phosphorylase involved in the regulation of the phosphoenolpyruvate synthase (PEPS) by catalyzing its phosphorylation/dephosphorylation. This Dichelobacter nodosus (strain VCS1703A) protein is Putative phosphoenolpyruvate synthase regulatory protein.